The following is a 217-amino-acid chain: Deoxyribose-phosphate aldolase (217 aa).

Asp-89 functions as the Proton donor/acceptor in the catalytic mechanism. Lys-151 (schiff-base intermediate with acetaldehyde) is an active-site residue. The active-site Proton donor/acceptor is the Lys-180.

Belongs to the DeoC/FbaB aldolase family. DeoC type 1 subfamily.

Its subcellular location is the cytoplasm. The catalysed reaction is 2-deoxy-D-ribose 5-phosphate = D-glyceraldehyde 3-phosphate + acetaldehyde. It participates in carbohydrate degradation; 2-deoxy-D-ribose 1-phosphate degradation; D-glyceraldehyde 3-phosphate and acetaldehyde from 2-deoxy-alpha-D-ribose 1-phosphate: step 2/2. Its function is as follows. Catalyzes a reversible aldol reaction between acetaldehyde and D-glyceraldehyde 3-phosphate to generate 2-deoxy-D-ribose 5-phosphate. The polypeptide is Deoxyribose-phosphate aldolase (Metamycoplasma arthritidis (strain 158L3-1) (Mycoplasma arthritidis)).